The primary structure comprises 692 residues: Elongation factor G (692 aa).

Positions 8–282 constitute a tr-type G domain; sequence EKTRNIGIMA…AVIDYLPSPL (275 aa). GTP contacts are provided by residues 17–24, 81–85, and 135–138; these read AHVDAGKT, DTPGH, and NKMD.

Belongs to the TRAFAC class translation factor GTPase superfamily. Classic translation factor GTPase family. EF-G/EF-2 subfamily.

It is found in the cytoplasm. Catalyzes the GTP-dependent ribosomal translocation step during translation elongation. During this step, the ribosome changes from the pre-translocational (PRE) to the post-translocational (POST) state as the newly formed A-site-bound peptidyl-tRNA and P-site-bound deacylated tRNA move to the P and E sites, respectively. Catalyzes the coordinated movement of the two tRNA molecules, the mRNA and conformational changes in the ribosome. This chain is Elongation factor G, found in Streptococcus agalactiae serotype Ia (strain ATCC 27591 / A909 / CDC SS700).